We begin with the raw amino-acid sequence, 291 residues long: MPTLKDIRVRIKGVKSTQQVTKAMKMVAAAKLRRAQERAVMARPYAKKLKEMLGSLSAKVDTSRNPMLSGRSEVNKVLVILVTADRGLCGAFNTNAIKLASKIIHEDYPAIHSKGGVSLICAGSRGFDFFRKREYNIVKGYSAVFQHLDFSTAKEIADIASGMYLRGEVDRVLVAYNEFKSVLAPNLREEVILPIAPEIPGTESSSDYIYEPSPSAIIDELVPKHLNTQIWRMMLESSAAEQAARMSAMDSATENAKELMRTLNISYNRARQAAITTELSEIVSGADALTN.

Belongs to the ATPase gamma chain family. As to quaternary structure, F-type ATPases have 2 components, CF(1) - the catalytic core - and CF(0) - the membrane proton channel. CF(1) has five subunits: alpha(3), beta(3), gamma(1), delta(1), epsilon(1). CF(0) has three main subunits: a, b and c.

It localises to the cell inner membrane. In terms of biological role, produces ATP from ADP in the presence of a proton gradient across the membrane. The gamma chain is believed to be important in regulating ATPase activity and the flow of protons through the CF(0) complex. This Pelodictyon phaeoclathratiforme (strain DSM 5477 / BU-1) protein is ATP synthase gamma chain.